A 1297-amino-acid polypeptide reads, in one-letter code: Outer capsid protein VP1 (1297 aa).

It belongs to the aquareoviridae outer capsid VP1 protein family.

The protein localises to the virion. The enzyme catalyses a 5'-end diphospho-ribonucleoside in mRNA + GTP + H(+) = a 5'-end (5'-triphosphoguanosine)-ribonucleoside in mRNA + diphosphate. It catalyses the reaction a 5'-end (5'-triphosphoguanosine)-ribonucleoside in mRNA + S-adenosyl-L-methionine = a 5'-end (N(7)-methyl 5'-triphosphoguanosine)-ribonucleoside in mRNA + S-adenosyl-L-homocysteine. Its function is as follows. Outer capsid protein involved in mRNA capping. Catalyzes the last 3 enzymatic activities for formation of the 5' cap structure on the viral plus-strand transcripts, namely the RNA guanylyltransferase, RNA-7N- and RNA-2'O-methyltransferase activities. The sequence is that of Outer capsid protein VP1 (S1) from Oncorhynchus keta (Chum salmon).